The following is a 483-amino-acid chain: Uroporphyrinogen-III C-methyltransferase (483 aa).

The protein belongs to the precorrin methyltransferase family.

It catalyses the reaction uroporphyrinogen III + 2 S-adenosyl-L-methionine = precorrin-2 + 2 S-adenosyl-L-homocysteine + H(+). This Bacillus subtilis (strain 168) protein is Uroporphyrinogen-III C-methyltransferase (nasF).